A 261-amino-acid chain; its full sequence is Indole-3-glycerol phosphate synthase (261 aa).

Belongs to the TrpC family.

It carries out the reaction 1-(2-carboxyphenylamino)-1-deoxy-D-ribulose 5-phosphate + H(+) = (1S,2R)-1-C-(indol-3-yl)glycerol 3-phosphate + CO2 + H2O. Its pathway is amino-acid biosynthesis; L-tryptophan biosynthesis; L-tryptophan from chorismate: step 4/5. The polypeptide is Indole-3-glycerol phosphate synthase (Campylobacter hominis (strain ATCC BAA-381 / DSM 21671 / CCUG 45161 / LMG 19568 / NCTC 13146 / CH001A)).